Reading from the N-terminus, the 411-residue chain is Protrudin (411 aa).

The segment at 1 to 27 is disordered; that stretch reads MQTSEREGSGPELSPSVMPEAPLESPP. The Cytoplasmic portion of the chain corresponds to 1–66; it reads MQTSEREGSG…AGDGVRYLLR (66 aa). The tract at residues 1–92 is sufficient for homooligomerization; the sequence is MQTSEREGSG…LFLTLNEGAW (92 aa). Positions 1–205 are sufficient for localization to endoplasmic reticulum tubular network and for interactions with REEP1, REEP5, ATL1, ATL2, ATL3 and SPAST; that stretch reads MQTSEREGSG…LYLLPLCWVL (205 aa). Residues 51-64 form a necessary for interaction with RAB11A and function in neurite outgrowth region; it reads LEPLKDAGDGVRYL. A helical membrane pass occupies residues 67–87; sequence WQMPLCSLLTCLGLNVLFLTL. Residue asparagine 88 is a topological domain, lumenal. Residues 89–109 traverse the membrane as a helical segment; it reads EGAWYSVGALMISVPALLGYL. The Cytoplasmic portion of the chain corresponds to 110-187; sequence QEVCRARLPE…NPVVSSQFYG (78 aa). Residues 188 to 208 constitute an intramembrane region (helical); sequence ALLGTICMLYLLPLCWVLTLL. The Cytoplasmic segment spans residues 209–411; sequence NSTLFLGNVE…CASCNQTLSK (203 aa). Positions 234-286 are disordered; it reads MNPKQEEHAFESPPPPDVGGKGGLMDSTPALTPTEDLTPGSVEEAEEAEPDEE. The interval 271 to 361 is necessary for interaction with KIF5A; it reads TPGSVEEAEE…GCSATFSVLK (91 aa). Over residues 276–286 the composition is skewed to acidic residues; that stretch reads EEAEEAEPDEE. A necessary for interaction with VAPA region spans residues 286-292; sequence EFKDAIE. The FYVE-type zinc finger occupies 344 to 410; the sequence is TNNFGNCTGC…VCASCNQTLS (67 aa). Zn(2+) is bound by residues cysteine 350, cysteine 353, cysteine 366, cysteine 369, cysteine 374, cysteine 377, cysteine 402, and cysteine 405.

As to quaternary structure, can form homooligomers (monomers, dimers and tetramers). Interacts with RAB11A (GDP-bound form); regulates RAB11A. Interacts with FKBP8; may negatively regulate ZFYVE27 phosphorylation. Interacts with VAPA (via MSP domain); may regulate ZFYVE27 retention in the endoplasmic reticulum and its function in cell projections formation. Interacts with VAPB (via MSP domain). Interacts with RAB11B (GDP-bound form), REEP1, REEP5, ATL1, ATL2, ATL3, SPAST, SURF4, KIF5A, KIF5B, KIF5C and RTN3. In terms of processing, phosphorylated. Phosphorylation is induced by NGF through the MAPK/ERK pathway and modulates interaction with RAB11A.

The protein resides in the recycling endosome membrane. The protein localises to the endoplasmic reticulum membrane. It localises to the cell projection. It is found in the growth cone membrane. Functionally, key regulator of RAB11-dependent vesicular trafficking during neurite extension through polarized membrane transport. Promotes axonal elongation and contributes to the establishment of neuronal cell polarity. Involved in nerve growth factor-induced neurite formation in VAPA-dependent manner. Contributes to both the formation and stabilization of the tubular ER network. Involved in ER morphogenesis by regulating the sheet-to-tubule balance and possibly the density of tubule interconnections. Acts as an adapter protein that facilitates the interaction of KIF5A with VAPA, VAPB, SURF4, RAB11A, RAB11B and RTN3 and the ZFYVE27-KIF5A complex contributes to the transport of these proteins in neurons. Can induce formation of neurite-like membrane protrusions in non-neuronal cells in a KIF5A/B-dependent manner. The chain is Protrudin (ZFYVE27) from Pongo abelii (Sumatran orangutan).